A 982-amino-acid chain; its full sequence is MAELEHLGGKRAESARMRRAEQLRRWRGSLTEQEPAERRGAGRQPLTRRGSPRVRFEDGAVFLAACSSGDTDEVRKLLARGADINTVNVDGLTALHQACIDENLDMVKFLVENRANVNQQDNEGWTPLHAAASCGYLNIAEYFINHGASVGIVNSEGEVPSDLAEEPAMKDLLLEQVKKQGVDLEQSRKEEEQQMLQDARQWLNSGKIEDVRQARSGATALHVAAAKGYSEVLRLLIQAGYELNVQDYDGWTPLHAAAHWGVKEACSILAEALCDMDIRNKLGQTPFDVADEGLVEHLELLQKKQNVLRSEKETRNKLIESDLNSKIQSGFFKNKEKMLYEEETPKSQEMEEENKESSSSSSEEEEGEDEASESETEKEADKKPEAFVNHSNSESKSSITEQIPAPAQNTFSASSARRFSSGLFNKPEEPKDESPSSWRLGLRKTGSHNMLSEVANSREPIRDRGSSIYRSSSSPRISALLDNKDKERENKSYISSLAPRKLNSTSDIEEKENRESAVNLVRSGSYTRQLWRDEAKGNEIPQTIAPSTYVSTYLKRTPHKSQADTTAEKTADNVSSSTPLCVITNRPLPSTANGVTATPVLSITGTDSSVEAREKRRSYLTPVRDEEAESLRKARSRQARQTRRSTQGVTLTDLQEAERTFSRSRAERQAQEQPREKPTDTEGLEGSPEKHEPSAVPATEAGEGQQPWGRSLDEEPICHRLRCPAQPDKPTTPASPSTSRPSLYTSSHLLWTNRFSVPDSESSETTTNTTTAKEMDKNENEEADLDEQSSKRLSIRERRRPKERRRGTGINFWTKDEDETDGSEEVKETWHERLSRLESGGSNPTTSDSYGDRASARARREAREARLATLTSRVEEDSNRDYKKLYESALTENQKLKTKLQEAQLELADIKSKLEKVAQQKQEKTSDRSSVLEMEKRERRALERKMSEMEEEMKVLTELKSDNQRLKDENGALIRVISKLSK.

Residues 1–24 (MAELEHLGGKRAESARMRRAEQLR) are compositionally biased toward basic and acidic residues. The segment at 1-50 (MAELEHLGGKRAESARMRRAEQLRRWRGSLTEQEPAERRGAGRQPLTRRG) is disordered. The residue at position 29 (Ser29) is a Phosphoserine. 5 ANK repeats span residues 57-86 (EDGA…DINT), 90-119 (DGLT…NVNQ), 123-152 (EGWT…SVGI), 216-245 (SGAT…ELNV), and 249-278 (DGWT…DMDI). Disordered stretches follow at residues 342 to 517 (EETP…RESA), 556 to 579 (RTPH…SSTP), 606 to 864 (TDSS…EARE), and 918 to 948 (AQQK…KMSE). Residues 362–374 (SEEEEGEDEASES) are compositionally biased toward acidic residues. A compositionally biased stretch (basic and acidic residues) spans 375 to 385 (ETEKEADKKPE). The span at 389 to 401 (NHSNSESKSSITE) shows a compositional bias: polar residues. Residues 411–421 (FSASSARRFSS) are compositionally biased toward low complexity. Thr445 carries the phosphothreonine modification. The segment covering 466-478 (SSIYRSSSSPRIS) has biased composition (low complexity). A compositionally biased stretch (basic and acidic residues) spans 482 to 491 (DNKDKERENK). Positions 623 to 632 (VRDEEAESLR) are enriched in basic and acidic residues. A compositionally biased stretch (basic residues) spans 633 to 643 (KARSRQARQTR). Phosphothreonine is present on Thr646. A compositionally biased stretch (basic and acidic residues) spans 656 to 680 (EAERTFSRSRAERQAQEQPREKPTD). The span at 731–742 (TTPASPSTSRPS) shows a compositional bias: low complexity. The span at 743–755 (LYTSSHLLWTNRF) shows a compositional bias: polar residues. Residues 797 to 807 (ERRRPKERRRG) are compositionally biased toward basic residues. Phosphothreonine is present on Thr808. Positions 824 to 836 (EEVKETWHERLSR) are enriched in basic and acidic residues. Ser839 carries the phosphoserine modification. Residues 840–849 (GGSNPTTSDS) are compositionally biased toward polar residues. Composition is skewed to basic and acidic residues over residues 850 to 864 (YGDR…EARE), 918 to 927 (AQQKQEKTSD), and 933 to 948 (EMEK…KMSE). Ser947 is subject to Phosphoserine.

As to quaternary structure, PP1 comprises a catalytic subunit, PPP1CA, PPP1CB or PPP1CC, and one or several targeting or regulatory subunits. PPP1R12B mediates binding to myosin. Isoform 3 and isoform 4 bind PPP1R12A, but not isoform 1 of PPP1R12B itself. Binds IL16. Detected in skeletal muscle, fetal and adult heart, brain, placenta, kidney, spleen, thymus, pancreas and lung. Isoform 3 and isoform 4 are heart specific.

The protein localises to the cytoplasm. The protein resides in the cytoskeleton. It localises to the stress fiber. Regulates myosin phosphatase activity. Augments Ca(2+) sensitivity of the contractile apparatus. This is Protein phosphatase 1 regulatory subunit 12B (PPP1R12B) from Homo sapiens (Human).